A 407-amino-acid chain; its full sequence is Lysosome-associated membrane glycoprotein 1 (407 aa).

An N-terminal signal peptide occupies residues 1–21; it reads MAAPGAPRSLLLLLLAGLAHG. The interval 22–189 is first lumenal domain; it reads ASALFVVKDS…SKEETRCTQD (168 aa). At 22 to 371 the chain is on the lumenal side; the sequence is ASALFVVKDS…VEECMQDGNN (350 aa). 12 N-linked (GlcNAc...) asparagine glycosylation sites follow: Asn-32, Asn-40, Asn-57, Asn-72, Asn-79, Asn-98, Asn-102, Asn-116, Asn-125, Asn-145, Asn-160, and Asn-178. Residues Cys-36 and Cys-75 are joined by a disulfide bond. Cys-150 and Cys-186 are joined by a disulfide. A disordered region spans residues 183–206; that stretch reads ETRCTQDGPSPTTVPPSPSPPLVP. The interval 190 to 219 is hinge; sequence GPSPTTVPPSPSPPLVPTNPTVIKYNVTGE. Residues 194 to 206 show a composition bias toward pro residues; that stretch reads TTVPPSPSPPLVP. N-linked (GlcNAc...) asparagine glycosylation is found at Asn-215, Asn-220, Asn-233, Asn-241, Asn-253, Asn-283, Asn-297, Asn-304, and Asn-312. Positions 220-371 are second lumenal domain; the sequence is NGTCLLASMA…VEECMQDGNN (152 aa). A disulfide bond links Cys-223 and Cys-260. Cys-328 and Cys-365 form a disulfide bridge. A helical membrane pass occupies residues 372 to 395; it reads MLIPIAVGGALAGLVLIVLIAYLI. Topologically, residues 396–407 are cytoplasmic; the sequence is GRKRSHAGYQTI.

The protein belongs to the LAMP family. In terms of assembly, interacts with ABCB9; this interaction strongly stabilizes ABCB9 and protects ABCB9 against lysosomal degradation. Interacts with FURIN. Interacts with TMEM175; inhibiting the proton channel activity of TMEM175. Post-translationally, O- and N-glycosylated; some of the N-glycans attached to LAMP-1 are polylactosaminoglycans.

The protein resides in the lysosome membrane. It localises to the endosome membrane. Its subcellular location is the late endosome membrane. The protein localises to the cell membrane. It is found in the cytolytic granule membrane. Its function is as follows. Lysosomal membrane glycoprotein which plays an important role in lysosome biogenesis, lysosomal pH regulation, autophagy and cholesterol homeostasis. Acts as an important regulator of lysosomal lumen pH regulation by acting as a direct inhibitor of the proton channel TMEM175, facilitating lysosomal acidification for optimal hydrolase activity. Also plays an important role in NK-cells cytotoxicity. Mechanistically, participates in cytotoxic granule movement to the cell surface and perforin trafficking to the lytic granule. In addition, protects NK-cells from degranulation-associated damage induced by their own cytotoxic granule content. Presents carbohydrate ligands to selectins. The polypeptide is Lysosome-associated membrane glycoprotein 1 (LAMP1) (Cricetulus griseus (Chinese hamster)).